A 140-amino-acid polypeptide reads, in one-letter code: Ubiquitin-like protein ATG12 (140 aa).

Residues Met-1–Lys-52 are disordered. The span at Val-25–Pro-42 shows a compositional bias: low complexity. Gly-140 participates in a covalent cross-link: Glycyl lysine isopeptide (Gly-Lys) (interchain with K-? in acceptor protein).

Belongs to the ATG12 family. As to quaternary structure, forms a conjugate with ATG5. Part of the minor complex composed of 4 sets of ATG12-ATG5 and ATG16L1 (400 kDa); this complex interacts with ATG3 leading to disruption of ATG7 interaction and promotion of ATG8-like proteins lipidation. Forms an 800-kDa complex composed of ATG12-ATG5 and ATG16L2. Interacts with DHX58/RIG-1, IFIH1/MDA5 and MAVS/IPS-1 in monomeric form as well as in ATG12-ATG5 conjugate. The interaction with MAVS is further enhanced upon vesicular stomatitis virus (VSV) infection. Interacts with ATG3; this interaction is essential for phosphatidylethanolamine (PE)-conjugated ATG8-like proteins formation. Interacts with ATG7. Interacts with ATG10. Interacts with TECPR1. Interacts with SH3BGRL. The ATG12-ATG5 conjugate interacts with PDCD6IP (via the BRO1 domain); this interaction is bridged by ATG12 and promotes multiple PDCD6IP-mediated functions such as endolysosomal trafficking, macroautophagy and exosome biogenesis. Acetylated by EP300.

The protein localises to the cytoplasm. The protein resides in the preautophagosomal structure membrane. Its function is as follows. Ubiquitin-like protein involved in autophagy vesicles formation. Conjugation with ATG5 through a ubiquitin-like conjugating system involving also ATG7 as an E1-like activating enzyme and ATG10 as an E2-like conjugating enzyme, is essential for its function. The ATG12-ATG5 conjugate acts as an E3-like enzyme which is required for lipidation of ATG8 family proteins and their association to the vesicle membranes. The ATG12-ATG5 conjugate also negatively regulates the innate antiviral immune response by blocking the type I IFN production pathway through direct association with RARRES3 and MAVS. Also plays a role in translation or delivery of incoming viral RNA to the translation apparatus. As part of the ATG8 conjugation system with ATG5 and ATG16L1, required for recruitment of LRRK2 to stressed lysosomes and induction of LRRK2 kinase activity in response to lysosomal stress. The protein is Ubiquitin-like protein ATG12 of Pongo abelii (Sumatran orangutan).